The chain runs to 24 residues: Fraternine (24 aa).

A disulfide bridge links Cys11 with Cys24. Cys24 bears the Cysteine amide mark.

As to expression, expressed by the venom gland.

The protein localises to the secreted. Its function is as follows. Wasp venom peptide that acts as a potent mast cell degranulating peptide without hemolytic activity. Shows neuroprotective effect, since it prevents the death of dopaminergic neurons of the brain substantia nigra region and recovers motor deficit in a 6-hydroxydopamine (6-OHDA)-induced murine model of Parkinson disease. This is Fraternine from Parachartergus fraternus (Artistic wasp).